Here is a 272-residue protein sequence, read N- to C-terminus: Dihydropteroate synthase (272 aa).

Residues 1–251 (MIKTKIMGIL…GVRVHNVLLN (251 aa)) enclose the Pterin-binding domain. Asn-11 provides a ligand contact to Mg(2+). (7,8-dihydropterin-6-yl)methyl diphosphate-binding positions include Thr-51, Asp-89, Asn-108, Asp-172, Lys-208, and 244-246 (RVH).

The protein belongs to the DHPS family. Homodimer. Requires Mg(2+) as cofactor.

It carries out the reaction (7,8-dihydropterin-6-yl)methyl diphosphate + 4-aminobenzoate = 7,8-dihydropteroate + diphosphate. The protein operates within cofactor biosynthesis; tetrahydrofolate biosynthesis; 7,8-dihydrofolate from 2-amino-4-hydroxy-6-hydroxymethyl-7,8-dihydropteridine diphosphate and 4-aminobenzoate: step 1/2. Functionally, catalyzes the condensation of para-aminobenzoate (pABA) with 6-hydroxymethyl-7,8-dihydropterin diphosphate (DHPt-PP) to form 7,8-dihydropteroate (H2Pte), the immediate precursor of folate derivatives. The chain is Dihydropteroate synthase (folP) from Staphylococcus epidermidis (strain ATCC 35984 / DSM 28319 / BCRC 17069 / CCUG 31568 / BM 3577 / RP62A).